A 72-amino-acid chain; its full sequence is Toxin Cll8 (72 aa).

The signal sequence occupies residues 1 to 4; it reads TVSA. One can recognise an LCN-type CS-alpha/beta domain in the interval 5–70; the sequence is KEGYLVKKSN…TWPLPNKSCG (66 aa). 4 cysteine pairs are disulfide-bonded: Cys16–Cys69, Cys20–Cys45, Cys29–Cys50, and Cys33–Cys52. Cys69 bears the Cysteine amide mark.

It belongs to the long (4 C-C) scorpion toxin superfamily. Sodium channel inhibitor family. Beta subfamily. Expressed by the venom gland.

It localises to the secreted. Functionally, beta toxins bind voltage-independently at site-4 of sodium channels (Nav) and shift the voltage of activation toward more negative potentials thereby affecting sodium channel activation and promoting spontaneous and repetitive firing. The protein is Toxin Cll8 of Centruroides limpidus (Mexican scorpion).